The sequence spans 502 residues: Glycerol kinase (502 aa).

Threonine 14 contributes to the ADP binding site. ATP is bound by residues threonine 14, threonine 15, and serine 16. Residue threonine 14 participates in sn-glycerol 3-phosphate binding. Residue arginine 18 coordinates ADP. Positions 84, 85, 136, and 246 each coordinate sn-glycerol 3-phosphate. Glycerol is bound by residues arginine 84, glutamate 85, tyrosine 136, aspartate 246, and glutamine 247. Residues threonine 268 and glycine 311 each contribute to the ADP site. ATP contacts are provided by threonine 268, glycine 311, glutamine 315, and glycine 412. ADP-binding residues include glycine 412 and asparagine 416.

This sequence belongs to the FGGY kinase family. Homotetramer and homodimer (in equilibrium). Heterodimer with EIIA-Glc. Binds 1 zinc ion per glycerol kinase EIIA-Glc dimer. The zinc ion is important for dimerization.

The catalysed reaction is glycerol + ATP = sn-glycerol 3-phosphate + ADP + H(+). It participates in polyol metabolism; glycerol degradation via glycerol kinase pathway; sn-glycerol 3-phosphate from glycerol: step 1/1. Activity of this regulatory enzyme is affected by several metabolites. Allosterically and non-competitively inhibited by fructose 1,6-bisphosphate (FBP) and unphosphorylated phosphocarrier protein EIIA-Glc (III-Glc), an integral component of the bacterial phosphotransferase (PTS) system. In terms of biological role, key enzyme in the regulation of glycerol uptake and metabolism. Catalyzes the phosphorylation of glycerol to yield sn-glycerol 3-phosphate. The chain is Glycerol kinase from Salmonella arizonae (strain ATCC BAA-731 / CDC346-86 / RSK2980).